Reading from the N-terminus, the 274-residue chain is 2,3,4,5-tetrahydropyridine-2,6-dicarboxylate N-succinyltransferase (274 aa).

R104 and D141 together coordinate substrate.

Belongs to the transferase hexapeptide repeat family. Homotrimer.

It localises to the cytoplasm. It catalyses the reaction (S)-2,3,4,5-tetrahydrodipicolinate + succinyl-CoA + H2O = (S)-2-succinylamino-6-oxoheptanedioate + CoA. It functions in the pathway amino-acid biosynthesis; L-lysine biosynthesis via DAP pathway; LL-2,6-diaminopimelate from (S)-tetrahydrodipicolinate (succinylase route): step 1/3. The protein is 2,3,4,5-tetrahydropyridine-2,6-dicarboxylate N-succinyltransferase of Edwardsiella ictaluri (strain 93-146).